A 265-amino-acid chain; its full sequence is uncharacterized protein (265 aa).

A thiamine diphosphate-binding site is contributed by glutamate 47. The interval 204–247 is thiamine pyrophosphate binding; sequence QHQMWLVQHILRVARHCGFTVTTMEMTLIETQVRLKITVKSDRT.

It belongs to the TPP enzyme family. Mg(2+) is required as a cofactor. Requires thiamine diphosphate as cofactor.

In terms of biological role, truncated acetolactase synthase; no longer catalytically active. This is an uncharacterized protein from Haemophilus influenzae (strain ATCC 51907 / DSM 11121 / KW20 / Rd).